The chain runs to 192 residues: Ion-translocating oxidoreductase complex subunit A (192 aa).

The next 6 helical transmembrane spans lie at 5-25 (LLLLISTVLVNNFVLVKFLGL), 39-59 (IGMSMATTFVLTLASILSYLV), 65-85 (LPFDLSYLRTMSFILVIAVVV), 102-122 (ALGIYLPLITTNCAVLGVALL), 134-154 (AIYGFGAALGFSLVLILFSAM), and 171-191 (AIAMITAGLMSLAFMGFTGLV).

This sequence belongs to the NqrDE/RnfAE family. As to quaternary structure, the complex is composed of six subunits: RnfA, RnfB, RnfC, RnfD, RnfE and RnfG.

It is found in the cell inner membrane. Part of a membrane-bound complex that couples electron transfer with translocation of ions across the membrane. This is Ion-translocating oxidoreductase complex subunit A from Shewanella baltica (strain OS185).